The following is a 449-amino-acid chain: Glucose-6-phosphate isomerase (449 aa).

The active-site Proton donor is E291. Residues H312 and K426 contribute to the active site.

Belongs to the GPI family.

The protein localises to the cytoplasm. The catalysed reaction is alpha-D-glucose 6-phosphate = beta-D-fructose 6-phosphate. The protein operates within carbohydrate biosynthesis; gluconeogenesis. Its pathway is carbohydrate degradation; glycolysis; D-glyceraldehyde 3-phosphate and glycerone phosphate from D-glucose: step 2/4. In terms of biological role, catalyzes the reversible isomerization of glucose-6-phosphate to fructose-6-phosphate. The chain is Glucose-6-phosphate isomerase from Streptococcus pyogenes serotype M18 (strain MGAS8232).